The chain runs to 441 residues: Phenylalanine-4-hydroxylase (441 aa).

One can recognise an ACT domain in the interval 23 to 102 (FSISKGSDKI…KATTLQESSN (80 aa)). Fe cation is bound by residues histidine 273, histidine 278, and glutamate 318.

It belongs to the biopterin-dependent aromatic amino acid hydroxylase family. Homotetramer. It depends on Fe(2+) as a cofactor.

The enzyme catalyses (6R)-L-erythro-5,6,7,8-tetrahydrobiopterin + L-phenylalanine + O2 = (4aS,6R)-4a-hydroxy-L-erythro-5,6,7,8-tetrahydrobiopterin + L-tyrosine. It carries out the reaction (6R)-L-erythro-5,6,7,8-tetrahydrobiopterin + L-tryptophan + O2 = 5-hydroxy-L-tryptophan + (4aS,6R)-4a-hydroxy-L-erythro-5,6,7,8-tetrahydrobiopterin. It participates in amino-acid degradation; L-phenylalanine degradation; acetoacetate and fumarate from L-phenylalanine: step 1/6. In terms of biological role, catalyzes the hydroxylation of L-phenylalanine. Hydroxylates L-tryptophan to 5-hydroxy-L-tryptophan but does not hydroxylate L-tyrosine to L-DOPA. It uses D-threo-tetrahydrodictyopterin (DH4), also known as dictyoperin, as a cofactor. In Dictyostelium discoideum (Social amoeba), this protein is Phenylalanine-4-hydroxylase (pah).